Here is a 202-residue protein sequence, read N- to C-terminus: MENLIIYAFIYLLGSIPFGLILAKFFAKTDIKKEGSKSIGATNVLRVVKEKNPKLAKKLAIATIILDFAKAAIPLLILKFLHYDQALLWSVAVLAIFGHCFSIYLLFEGGKGIATGAGAMIVLLPLEVLTAFIVWVVIGKIFKISSLASLAALLAFVISSFIFNYDLEIHTHAPVFIIAFIIIYKHLPNIKRLIFKEECKVI.

The next 6 membrane-spanning stretches (helical) occupy residues 3–23 (NLII…LILA), 61–81 (IATI…LKFL), 87–107 (LLWS…YLLF), 118–138 (GAMI…WVVI), 144–164 (ISSL…FIFN), and 167–187 (LEIH…YKHL).

Belongs to the PlsY family. Probably interacts with PlsX.

It localises to the cell inner membrane. It catalyses the reaction an acyl phosphate + sn-glycerol 3-phosphate = a 1-acyl-sn-glycero-3-phosphate + phosphate. It functions in the pathway lipid metabolism; phospholipid metabolism. In terms of biological role, catalyzes the transfer of an acyl group from acyl-phosphate (acyl-PO(4)) to glycerol-3-phosphate (G3P) to form lysophosphatidic acid (LPA). This enzyme utilizes acyl-phosphate as fatty acyl donor, but not acyl-CoA or acyl-ACP. The chain is Glycerol-3-phosphate acyltransferase from Campylobacter jejuni subsp. jejuni serotype O:23/36 (strain 81-176).